A 324-amino-acid chain; its full sequence is Fibronectin type III domain-containing protein 8 (324 aa).

One can recognise a Fibronectin type-III domain in the interval 179–280 (PDTPFIFEHT…KPYKFATLAT (102 aa)).

This is Fibronectin type III domain-containing protein 8 (FNDC8) from Macaca fascicularis (Crab-eating macaque).